Reading from the N-terminus, the 104-residue chain is BLOC-1-related complex subunit 7 (104 aa).

Belongs to the BORCS7 family.

The protein resides in the lysosome membrane. Functionally, as part of a BORC-like complex may play a role in lysosomes movement and localization at the cell periphery. Associated with the cytosolic face of lysosomes, this complex may couple lysosomes to microtubule plus-end-directed kinesin motor. The chain is BLOC-1-related complex subunit 7 from Xenopus tropicalis (Western clawed frog).